Consider the following 665-residue polypeptide: Envelope glycoprotein (665 aa).

Positions 1–33 are cleaved as a signal peptide; it reads MARSTLSKPLKNKVNPRGPLIPLILLMLRGVST. The interval 34 to 267 is receptor-binding domain (RBD); that stretch reads ASPGSSPHQV…RYQNLGPRVP (234 aa). Residues 34–610 are Extracellular-facing; that stretch reads ASPGSSPHQV…FNRSPWFTTL (577 aa). A glycan (N-linked (GlcNAc...) asparagine; by host) is linked at asparagine 45. 5 disulfides stabilise this stretch: cysteine 79–cysteine 129, cysteine 105–cysteine 118, cysteine 106–cysteine 114, cysteine 152–cysteine 172, and cysteine 164–cysteine 177. Residue aspartate 117 coordinates Zn(2+). Asparagine 199 carries N-linked (GlcNAc...) asparagine; by host glycosylation. An intrachain disulfide couples cysteine 209 to cysteine 215. Residues 268–309 form a disordered region; the sequence is IGPNPVLADQQPLSKPKPVKSPSVTKPPSGTPLSPTQLPPAG. Low complexity predominate over residues 281–299; it reads SKPKPVKSPSVTKPPSGTP. N-linked (GlcNAc...) asparagine; by host glycosylation is present at asparagine 326. 6 disulfides stabilise this stretch: cysteine 336/cysteine 339, cysteine 336/cysteine 563, cysteine 366/cysteine 420, cysteine 385/cysteine 397, cysteine 427/cysteine 440, and cysteine 555/cysteine 562. Residues 336-339 carry the CXXC motif; it reads CWLC. Residues asparagine 358 and asparagine 365 are each glycosylated (N-linked (GlcNAc...) asparagine; by host). Residues asparagine 398 and asparagine 434 are each glycosylated (N-linked (GlcNAc...) asparagine; by host). The tract at residues 472 to 492 is fusion peptide; sequence VSLTLALLLGGLTMGGIAAGI. Positions 500–537 form a coiled coil; it reads MATQQFQQLQAAVQDDLREVEKSISNLEKSLTSLSEVV. The immunosuppression stretch occupies residues 538–554; sequence LQNRRGLDLLFLKEGGL. Residues 555–563 carry the CX6CC motif; it reads CAALKEECC. The helical transmembrane segment at 611-631 threads the bilayer; the sequence is ISTIMGPLIVLLMILLFGPCI. Residue cysteine 630 is the site of S-palmitoyl cysteine; by host attachment. Over 632–665 the chain is Cytoplasmic; it reads LNRLVQFVKDRISVVQALVLTQQYHQLKPIEYEP. The YXXL motif; contains endocytosis signal motif lies at 655–658; sequence YHQL.

The mature envelope protein (Env) consists of a trimer of SU-TM heterodimers attached by a labile interchain disulfide bond. The activated Env consists of SU monomers and TM trimers. Post-translationally, specific enzymatic cleavages in vivo yield mature proteins. Envelope glycoproteins are synthesized as an inactive precursor that is N-glycosylated and processed likely by host cell furin or by a furin-like protease in the Golgi to yield the mature SU and TM proteins. The cleavage site between SU and TM requires the minimal sequence [KR]-X-[KR]-R. The R-peptide is released from the C-terminus of the cytoplasmic tail of the TM protein upon particle formation as a result of proteolytic cleavage by the viral protease. Cleavage of this peptide is required for TM to become fusogenic. The CXXC motif is highly conserved across a broad range of retroviral envelope proteins. It is thought to participate in the formation of a labile disulfide bond possibly with the CX6CC motif present in the transmembrane protein. Isomerization of the intersubunit disulfide bond to an SU intrachain disulfide bond is thought to occur upon receptor recognition in order to allow membrane fusion. In terms of processing, the transmembrane protein is palmitoylated. Post-translationally, the R-peptide is palmitoylated.

It is found in the virion membrane. It localises to the host cell membrane. The surface protein (SU) attaches the virus to the host cell by binding to its receptor. Interaction with HECT ubiquitin ligases activates a thiol in a CXXC motif of the C-terminal domain, where the other Cys residue participates in the formation of the intersubunit disulfide. The activated thiol will attack the disulfide and cause its isomerization into a disulfide isomer within the motif. This leads to SU displacement and TM refolding, and is thought to activate its fusogenic potential by unmasking its fusion peptide. Fusion occurs at the host cell plasma membrane. Its function is as follows. The transmembrane protein (TM) acts as a class I viral fusion protein. Under the current model, the protein has at least 3 conformational states: pre-fusion native state, pre-hairpin intermediate state, and post-fusion hairpin state. During viral and target cell membrane fusion, the coiled coil regions (heptad repeats) assume a trimer-of-hairpins structure, positioning the fusion peptide in close proximity to the C-terminal region of the ectodomain. The formation of this structure appears to drive apposition and subsequent fusion of viral and target cell membranes. Membranes fusion leads to delivery of the nucleocapsid into the cytoplasm. The protein is Envelope glycoprotein (env) of Mus musculus (Mouse).